Consider the following 682-residue polypeptide: TBC1 domain family member 23 (682 aa).

Residues 29–210 (PVPCDLRTKV…AIWDNYLQQA (182 aa)) form the Rab-GAP TBC domain. The Rhodanese domain occupies 318-426 (DGVRFFVVDC…GFMALQQHLA (109 aa)).

The protein localises to the golgi apparatus. The protein resides in the trans-Golgi network. It localises to the cytoplasmic vesicle. Its function is as follows. Putative Rab GTPase-activating protein which plays a role in vesicular trafficking. Involved in endosome-to-Golgi trafficking. Acts as a bridging protein by binding simultaneously to golgins, located at the trans-Golgi, and to the WASH complex, located on endosome-derived vesicles. Plays a role in brain development. May act as a general inhibitor of innate immunity signaling. This is TBC1 domain family member 23 (tbc1d23) from Xenopus laevis (African clawed frog).